A 153-amino-acid polypeptide reads, in one-letter code: Superoxide dismutase [Cu-Zn] (153 aa).

Asparagine 24 carries an N-linked (GlcNAc...) asparagine glycan. 3 residues coordinate Cu cation: histidine 47, histidine 49, and histidine 64. Cysteine 58 and cysteine 147 are joined by a disulfide. Residues histidine 64, histidine 72, histidine 81, and aspartate 84 each contribute to the Zn(2+) site. Histidine 121 is a binding site for Cu cation. Over residues aspartate 126–lysine 137 the composition is skewed to basic and acidic residues. Positions aspartate 126–proline 145 are disordered. Residue arginine 144 participates in substrate binding.

It belongs to the Cu-Zn superoxide dismutase family. As to quaternary structure, homodimer. Cu cation is required as a cofactor. Zn(2+) serves as cofactor.

Its subcellular location is the cytoplasm. It catalyses the reaction 2 superoxide + 2 H(+) = H2O2 + O2. Destroys radicals which are normally produced within the cells and which are toxic to biological systems. In Humicola lutea, this protein is Superoxide dismutase [Cu-Zn].